The following is a 761-amino-acid chain: Complement factor B (761 aa).

Residues 1 to 22 form the signal peptide; that stretch reads MESPQLCLVLLVLGFSSGGVSA. Sushi domains follow at residues 32 to 97, 98 to 157, and 160 to 217; these read VSCS…ECRA, IRCP…ICDD, and GYCP…SCQD. Intrachain disulfides connect Cys34–Cys73, Cys59–Cys95, Cys100–Cys142, Cys128–Cys155, Cys162–Cys202, and Cys188–Cys215. Asn119 and Asn139 each carry an N-linked (GlcNAc...) asparagine glycan. Residues 267-466 enclose the VWFA domain; sequence NIYLVLDGSD…DLENVFYQMI (200 aa). The Mg(2+) site is built by Ser275 and Ser277. An N-linked (GlcNAc...) asparagine glycan is attached at Asn282. Thr350 contacts Mg(2+). Asn375 carries N-linked (GlcNAc...) asparagine glycosylation. Residues 474–754 form the Peptidase S1 domain; sequence LCGMVWEHKK…VLPWLKDKLK (281 aa). 5 cysteine pairs are disulfide-bonded: Cys475/Cys593, Cys508/Cys524, Cys596/Cys612, Cys653/Cys679, and Cys692/Cys722. Active-site charge relay system residues include His523 and Asp573. The Charge relay system role is filled by Ser696.

Belongs to the peptidase S1 family. As to quaternary structure, monomer. Interacts with complement C3b; this interaction is dependent on the presence of Mg(2+). In terms of assembly, catalytic component of the C3 convertase of the alternative complement pathway, also named C3bBb, composed of complement factor B Bb and complement C3b. Catalytic component of the C5 convertase of the alternative complement pathway, also named C3bBb3b, composed of complement factor B Bb and additional molecules of complement C3b. Interacts to CFP; this interaction contributes to the stabilization of the active C3-convertase enzyme complex. Requires Mg(2+) as cofactor. Mn(2+) serves as cofactor. Post-translationally, cleaved by CFD following activation of the alternative complement system, generating Ba and Bb chains. Cleavage and activation takes place when CFB is already associated with complement C3b.

The protein resides in the secreted. It is found in the cell surface. The catalysed reaction is Cleavage of Arg-|-Ser bond in complement component C3 alpha-chain to yield C3a and C3b, and Arg-|-Xaa bond in complement component C5 alpha-chain to yield C5a and C5b.. Its function is as follows. Precursor of the catalytic component of the C3 and C5 convertase complexes of the alternative pathway of the complement system, a cascade of proteins that leads to phagocytosis and breakdown of pathogens and signaling that strengthens the adaptive immune system. The alternative complement pathway acts as an amplification loop that enhances other complement pathways (classical, lectin and GZMK) by promoting formation of additional C3 and C5 convertases. CFB is cleaved and activated by CFD to generate Ba and Bb chains; Bb chain constituting the catalytic component of the C3 and C5 convertases. Serine protease component of the complement C3 and C5 convertase complexes of the alternative complement pathway. Following cleavage and activation by factor D (CFD), forms the C3 convertase together with complement C3b. As part of the C3 convertase, cleaves and activates C3 into C3a anaphylatoxin and C3b opsonin, the next components of the complement pathways. When an additional complement C3b molecule binds to the C3 convertase, forms the C5 convertase, which cleaves and activates C5 into C5a anaphylatoxin and C5b component of the membrane attack complex. Functionally, involved in proliferation and differentiation of preactivated B-lymphocytes, rapid spreading of peripheral blood monocytes, stimulation of lymphocyte blastogenesis and lysis of erythrocytes. The chain is Complement factor B (Cfb) from Mus musculus (Mouse).